Consider the following 239-residue polypeptide: Pyridoxine 5'-phosphate synthase (239 aa).

Asn-7 contributes to the 3-amino-2-oxopropyl phosphate binding site. Position 9–10 (9–10 (DH)) interacts with 1-deoxy-D-xylulose 5-phosphate. Residue Arg-18 coordinates 3-amino-2-oxopropyl phosphate. His-43 acts as the Proton acceptor in catalysis. The 1-deoxy-D-xylulose 5-phosphate site is built by Arg-45 and His-50. Residue Glu-70 is the Proton acceptor of the active site. Residue Thr-100 participates in 1-deoxy-D-xylulose 5-phosphate binding. The active-site Proton donor is His-191. 3-amino-2-oxopropyl phosphate is bound by residues Gly-192 and 213-214 (GH).

This sequence belongs to the PNP synthase family. Homooctamer; tetramer of dimers.

It is found in the cytoplasm. It catalyses the reaction 3-amino-2-oxopropyl phosphate + 1-deoxy-D-xylulose 5-phosphate = pyridoxine 5'-phosphate + phosphate + 2 H2O + H(+). Its pathway is cofactor biosynthesis; pyridoxine 5'-phosphate biosynthesis; pyridoxine 5'-phosphate from D-erythrose 4-phosphate: step 5/5. In terms of biological role, catalyzes the complicated ring closure reaction between the two acyclic compounds 1-deoxy-D-xylulose-5-phosphate (DXP) and 3-amino-2-oxopropyl phosphate (1-amino-acetone-3-phosphate or AAP) to form pyridoxine 5'-phosphate (PNP) and inorganic phosphate. The protein is Pyridoxine 5'-phosphate synthase of Trichormus variabilis (strain ATCC 29413 / PCC 7937) (Anabaena variabilis).